Consider the following 86-residue polypeptide: Large ribosomal subunit protein uL23 (86 aa).

This sequence belongs to the universal ribosomal protein uL23 family. In terms of assembly, part of the 50S ribosomal subunit. Contacts protein L29.

Its function is as follows. Binds to 23S rRNA. One of the proteins that surrounds the polypeptide exit tunnel on the outside of the ribosome. This Methanococcus maripaludis (strain C6 / ATCC BAA-1332) protein is Large ribosomal subunit protein uL23.